The sequence spans 92 residues: Integration host factor subunit beta (92 aa).

Belongs to the bacterial histone-like protein family. In terms of assembly, heterodimer of an alpha and a beta chain.

In terms of biological role, this protein is one of the two subunits of integration host factor, a specific DNA-binding protein that functions in genetic recombination as well as in transcriptional and translational control. The chain is Integration host factor subunit beta from Bartonella tribocorum (strain CIP 105476 / IBS 506).